The following is a 181-amino-acid chain: UPF0177 protein YbdI (181 aa).

The next 5 helical transmembrane spans lie at 10-30, 41-61, 81-101, 114-134, and 161-181; these read ILFL…GVFA, LLWL…AHYL, FVDS…IAPI, FFSH…LIHT, and SDSI…HIII.

The protein belongs to the UPF0177 family.

Its subcellular location is the cell membrane. The sequence is that of UPF0177 protein YbdI (ybdI) from Lactococcus lactis subsp. lactis (strain IL1403) (Streptococcus lactis).